A 101-amino-acid chain; its full sequence is MTDANPAFDTVHPSGHILVRSCRGGYMHSVSLSEAAMETDAETLAEAILLTADVSCLKALLEVRNEIVAAGHTPSAQVPTTDDLNVAIEKLLAHQLRRRNR.

This is an uncharacterized protein from Mycobacterium tuberculosis (strain CDC 1551 / Oshkosh).